A 348-amino-acid chain; its full sequence is Large ribosomal subunit protein uL3m (348 aa).

The N-terminal 40 residues, 1 to 40 (MPGWRLLTQVGAQVLGRLGDGLGAALGPGNRTHIWLFVRG), are a transit peptide targeting the mitochondrion.

This sequence belongs to the universal ribosomal protein uL3 family. In terms of assembly, component of the mitochondrial large ribosomal subunit (mt-LSU). Mature mammalian 55S mitochondrial ribosomes consist of a small (28S) and a large (39S) subunit. The 28S small subunit contains a 12S ribosomal RNA (12S mt-rRNA) and 30 different proteins. The 39S large subunit contains a 16S rRNA (16S mt-rRNA), a copy of mitochondrial valine transfer RNA (mt-tRNA(Val)), which plays an integral structural role, and 52 different proteins.

It localises to the mitochondrion. The sequence is that of Large ribosomal subunit protein uL3m (MRPL3) from Homo sapiens (Human).